Reading from the N-terminus, the 302-residue chain is Ornithine carbamoyltransferase (302 aa).

Carbamoyl phosphate contacts are provided by residues 52 to 55, Gln79, Arg103, and 130 to 133; these read STRT and HPCQ. L-ornithine-binding positions include Asn161, Asp221, and 225–226; that span reads SM. Carbamoyl phosphate is bound by residues 261-262 and Arg289; that span reads CL.

The protein belongs to the aspartate/ornithine carbamoyltransferase superfamily. OTCase family.

Its subcellular location is the cytoplasm. The enzyme catalyses carbamoyl phosphate + L-ornithine = L-citrulline + phosphate + H(+). It functions in the pathway amino-acid biosynthesis; L-arginine biosynthesis; L-arginine from L-ornithine and carbamoyl phosphate: step 1/3. Reversibly catalyzes the transfer of the carbamoyl group from carbamoyl phosphate (CP) to the N(epsilon) atom of ornithine (ORN) to produce L-citrulline. The sequence is that of Ornithine carbamoyltransferase from Methanosarcina acetivorans (strain ATCC 35395 / DSM 2834 / JCM 12185 / C2A).